A 1013-amino-acid chain; its full sequence is Lysosomal alpha-mannosidase (1013 aa).

Positions 1-49 (MGTGPLTSGVRAGGGNTGWLWMSSCNLGSPVLPISFLFWLLLAAPGARA) are cleaved as a signal peptide. Disulfide bonds link Cys-55–Cys-358 and Cys-268–Cys-273. Residues His-72, Asp-74, and Asp-196 each contribute to the Zn(2+) site. Catalysis depends on Asp-196, which acts as the Nucleophile. N-linked (GlcNAc...) asparagine glycans are attached at residues Asn-310, Asn-345, and Asn-367. A disulfide bridge links Cys-412 with Cys-472. His-446 lines the Zn(2+) pocket. Residues Asn-489, Asn-497, Asn-544, Asn-633, Asn-646, Asn-693, Asn-767, and Asn-931 are each glycosylated (N-linked (GlcNAc...) asparagine). An intrachain disulfide couples Cys-493 to Cys-501.

Belongs to the glycosyl hydrolase 38 family. Requires Zn(2+) as cofactor.

The protein resides in the lysosome. It carries out the reaction Hydrolysis of terminal, non-reducing alpha-D-mannose residues in alpha-D-mannosides.. In terms of biological role, necessary for the catabolism of N-linked carbohydrates released during glycoprotein turnover. This chain is Lysosomal alpha-mannosidase (Man2b1), found in Mus musculus (Mouse).